Here is a 750-residue protein sequence, read N- to C-terminus: Photosystem I P700 chlorophyll a apoprotein A1 (750 aa).

8 helical membrane-spanning segments follow: residues 70–93 (IFSA…FHGA), 156–179 (LYCT…FHYH), 195–219 (LNHH…HVSL), 291–309 (IAHH…GHMY), 346–369 (WHAQ…HHMY), 385–411 (LSLF…IFMV), 433–455 (AIIS…LYIH), and 531–549 (FLVH…LILL). Residues Cys573 and Cys582 each contribute to the [4Fe-4S] cluster site. 2 consecutive transmembrane segments (helical) span residues 589-610 (HVFL…HFSW) and 664-686 (LSAY…MFLF). His675 lines the chlorophyll a' pocket. Chlorophyll a-binding residues include Met683 and Tyr691. Trp692 is a phylloquinone binding site. A helical transmembrane segment spans residues 724 to 744 (AVGVTHYLLGGIATTWAFFLA).

Belongs to the PsaA/PsaB family. As to quaternary structure, the PsaA/B heterodimer binds the P700 chlorophyll special pair and subsequent electron acceptors. PSI consists of a core antenna complex that captures photons, and an electron transfer chain that converts photonic excitation into a charge separation. The eukaryotic PSI reaction center is composed of at least 11 subunits. It depends on P700 is a chlorophyll a/chlorophyll a' dimer, A0 is one or more chlorophyll a, A1 is one or both phylloquinones and FX is a shared 4Fe-4S iron-sulfur center. as a cofactor.

The protein localises to the plastid. It is found in the chloroplast thylakoid membrane. The catalysed reaction is reduced [plastocyanin] + hnu + oxidized [2Fe-2S]-[ferredoxin] = oxidized [plastocyanin] + reduced [2Fe-2S]-[ferredoxin]. In terms of biological role, psaA and PsaB bind P700, the primary electron donor of photosystem I (PSI), as well as the electron acceptors A0, A1 and FX. PSI is a plastocyanin-ferredoxin oxidoreductase, converting photonic excitation into a charge separation, which transfers an electron from the donor P700 chlorophyll pair to the spectroscopically characterized acceptors A0, A1, FX, FA and FB in turn. Oxidized P700 is reduced on the lumenal side of the thylakoid membrane by plastocyanin. This chain is Photosystem I P700 chlorophyll a apoprotein A1, found in Lotus japonicus (Lotus corniculatus var. japonicus).